The sequence spans 557 residues: Formate--tetrahydrofolate ligase 2 (557 aa).

66–73 (TPAGEGKT) lines the ATP pocket.

Belongs to the formate--tetrahydrofolate ligase family.

The enzyme catalyses (6S)-5,6,7,8-tetrahydrofolate + formate + ATP = (6R)-10-formyltetrahydrofolate + ADP + phosphate. It participates in one-carbon metabolism; tetrahydrofolate interconversion. The sequence is that of Formate--tetrahydrofolate ligase 2 from Streptococcus pyogenes serotype M18 (strain MGAS8232).